We begin with the raw amino-acid sequence, 143 residues long: Hemoglobin-1 (143 aa).

Ser-2 carries the post-translational modification N-acetylserine. Residues 2-143 (SLSAAQKDNV…ALMGMIRPNM (142 aa)) enclose the Globin domain. Residue His-97 coordinates heme b.

This sequence belongs to the globin family. Monomer.

The protein localises to the cytoplasm. In terms of biological role, serves to transport hydrogen sulfide to autotrophic bacteria. In Phacoides pectinatus (Thick lucine), this protein is Hemoglobin-1.